The chain runs to 156 residues: Glycine cleavage system H protein 2, mitochondrial (156 aa).

The N-terminal 23 residues, 1 to 23, are a transit peptide targeting the mitochondrion; it reads MACRLFWASRVASHLRISVAQRG. One can recognise a Lipoyl-binding domain in the interval 47–129; the sequence is KATFGITDHA…YEQGWIIKVE (83 aa). K88 carries the post-translational modification N6-lipoyllysine. S131 is modified (phosphoserine).

The protein belongs to the GcvH family. As to quaternary structure, the glycine cleavage system is composed of four proteins: P, T, L and H. (R)-lipoate is required as a cofactor.

Its subcellular location is the mitochondrion. Its function is as follows. The glycine decarboxylase (GDC) or glycine cleavage system catalyzes the degradation of glycine. The H protein shuttles the methylamine group of glycine from the P protein to the T protein. This is Glycine cleavage system H protein 2, mitochondrial (GDH2) from Arabidopsis thaliana (Mouse-ear cress).